The sequence spans 37 residues: Antifungal protein 4 (37 aa).

It is found in the secreted. Its function is as follows. Possesses antifungal activity against P.infestans but not F.graminearum. The polypeptide is Antifungal protein 4 (Malva parviflora (Little mallow)).